A 272-amino-acid chain; its full sequence is Phosphate import ATP-binding protein PstB 1 (272 aa).

Residues 26-267 enclose the ABC transporter domain; sequence ITIENLDLHY…PMKKQTEDYI (242 aa). Residue 58-65 participates in ATP binding; that stretch reads GPSGCGKS.

This sequence belongs to the ABC transporter superfamily. Phosphate importer (TC 3.A.1.7) family. The complex is composed of two ATP-binding proteins (PstB), two transmembrane proteins (PstC and PstA) and a solute-binding protein (PstS).

The protein resides in the cell inner membrane. It catalyses the reaction phosphate(out) + ATP + H2O = ADP + 2 phosphate(in) + H(+). Part of the ABC transporter complex PstSACB involved in phosphate import. Responsible for energy coupling to the transport system. This Vibrio vulnificus (strain YJ016) protein is Phosphate import ATP-binding protein PstB 1.